The primary structure comprises 274 residues: 4-hydroxy-tetrahydrodipicolinate reductase (274 aa).

NAD(+) is bound by residues 8–13, E34, 102–104, and 128–131; these read GALGRM, GTT, and SQNF. H160 acts as the Proton donor/acceptor in catalysis. H161 lines the (S)-2,3,4,5-tetrahydrodipicolinate pocket. K164 serves as the catalytic Proton donor. Position 170–171 (170–171) interacts with (S)-2,3,4,5-tetrahydrodipicolinate; the sequence is GT.

Belongs to the DapB family.

It localises to the cytoplasm. The enzyme catalyses (S)-2,3,4,5-tetrahydrodipicolinate + NAD(+) + H2O = (2S,4S)-4-hydroxy-2,3,4,5-tetrahydrodipicolinate + NADH + H(+). It catalyses the reaction (S)-2,3,4,5-tetrahydrodipicolinate + NADP(+) + H2O = (2S,4S)-4-hydroxy-2,3,4,5-tetrahydrodipicolinate + NADPH + H(+). It functions in the pathway amino-acid biosynthesis; L-lysine biosynthesis via DAP pathway; (S)-tetrahydrodipicolinate from L-aspartate: step 4/4. Its function is as follows. Catalyzes the conversion of 4-hydroxy-tetrahydrodipicolinate (HTPA) to tetrahydrodipicolinate. In Methanocaldococcus jannaschii (strain ATCC 43067 / DSM 2661 / JAL-1 / JCM 10045 / NBRC 100440) (Methanococcus jannaschii), this protein is 4-hydroxy-tetrahydrodipicolinate reductase.